The primary structure comprises 360 residues: Phosphoserine aminotransferase (360 aa).

Arg41 is an L-glutamate binding site. Residues Trp101, Thr152, Asp172, and Gln195 each coordinate pyridoxal 5'-phosphate. N6-(pyridoxal phosphate)lysine is present on Lys196. 237-238 (NT) serves as a coordination point for pyridoxal 5'-phosphate.

This sequence belongs to the class-V pyridoxal-phosphate-dependent aminotransferase family. SerC subfamily. In terms of assembly, homodimer. Pyridoxal 5'-phosphate is required as a cofactor.

It localises to the cytoplasm. The enzyme catalyses O-phospho-L-serine + 2-oxoglutarate = 3-phosphooxypyruvate + L-glutamate. It catalyses the reaction 4-(phosphooxy)-L-threonine + 2-oxoglutarate = (R)-3-hydroxy-2-oxo-4-phosphooxybutanoate + L-glutamate. It participates in amino-acid biosynthesis; L-serine biosynthesis; L-serine from 3-phospho-D-glycerate: step 2/3. Its pathway is cofactor biosynthesis; pyridoxine 5'-phosphate biosynthesis; pyridoxine 5'-phosphate from D-erythrose 4-phosphate: step 3/5. Its function is as follows. Catalyzes the reversible conversion of 3-phosphohydroxypyruvate to phosphoserine and of 3-hydroxy-2-oxo-4-phosphonooxybutanoate to phosphohydroxythreonine. The polypeptide is Phosphoserine aminotransferase (Burkholderia ambifaria (strain MC40-6)).